A 321-amino-acid chain; its full sequence is MINSFESQKVDNDYKIAAFYSFSPIAEKVITTFLSKLRIIAEKHNVRGTVLVALEGINGTICGPVEGVTAMQKQLDSLDLETPLEIKYSYTSRQAFRRFKARRKNEIVTMGVENVDPCKTTGKYVEPEDWNAFLDDPLTLVIDTRNEYEISVGSFDGAVNPRTDSFREFPEWVDKKLHSLLKKKSFKKIALFCTGGIRCEKASALLLREGFPEVHHLHGGILRYLEEVPENESRWNGECFVFDQRVALNHKLMPGVYKLCFACGMPLSPQDQNGKYYIPSIQCHHCVDLFSDDDRERFRERQRHIARLGERFPGNSIWPSA.

The 99-residue stretch at 135 to 233 (DDPLTLVIDT…YLEEVPENES (99 aa)) folds into the Rhodanese domain. The active-site Cysteine persulfide intermediate is the cysteine 193.

Belongs to the TrhO family.

The enzyme catalyses uridine(34) in tRNA + AH2 + O2 = 5-hydroxyuridine(34) in tRNA + A + H2O. Its function is as follows. Catalyzes oxygen-dependent 5-hydroxyuridine (ho5U) modification at position 34 in tRNAs. This chain is tRNA uridine(34) hydroxylase, found in Prochlorococcus marinus (strain SARG / CCMP1375 / SS120).